A 355-amino-acid polypeptide reads, in one-letter code: Protein RecA (355 aa).

Position 65 to 72 (65 to 72) interacts with ATP; sequence GPESSGKT.

This sequence belongs to the RecA family.

The protein localises to the cytoplasm. Functionally, can catalyze the hydrolysis of ATP in the presence of single-stranded DNA, the ATP-dependent uptake of single-stranded DNA by duplex DNA, and the ATP-dependent hybridization of homologous single-stranded DNAs. It interacts with LexA causing its activation and leading to its autocatalytic cleavage. The sequence is that of Protein RecA from Pseudomonas entomophila (strain L48).